The sequence spans 1116 residues: ELKS/Rab6-interacting/CAST family member 1 (1116 aa).

The interval 1-54 is disordered; that stretch reads MYGSARSVGKVEPSSQSPGRSPRLPRSPRLGHRRTNSTGGSSGSSVGGGSGKTL. K10 carries the N6-acetyllysine modification. Residues 13–28 show a composition bias toward low complexity; it reads PSSQSPGRSPRLPRSP. 3 positions are modified to phosphoserine: S17, S21, and S37. A Phosphothreonine modification is found at T38. The span at 40-51 shows a compositional bias: gly residues; sequence GSSGSSVGGGSG. S55, S75, and S94 each carry phosphoserine. Residues 144–988 adopt a coiled-coil conformation; it reads RQARDNTIMD…RMKLMADNYE (845 aa). Over residues 590–602 the composition is skewed to basic and acidic residues; it reads KEKQMSSLKERVK. Disordered stretches follow at residues 590-609 and 814-836; these read KEKQ…ADTT and ARRR…RKKD. S1005 carries the post-translational modification Phosphoserine. T1046 carries the post-translational modification Phosphothreonine. The FIP-RBD domain occupies 1046–1108; it reads TPPASYNLDD…DHCPDILEQV (63 aa). Positions 1060-1100 form a coiled coil; sequence WENELQKMTRGQLQDELEKGERDNAELQEFANAILQQIADH.

As to quaternary structure, part of a complex with CHUK, IKBKB and IKBKG. Interacts with CHUK, IKBKB and IKBKG. The interaction with IKBKG is independent of CHUK and IKBKB. Interacts with NFKBIA. Isoform 4 interacts with PPFIA1, and through its C-terminus with the PDZ domains of RIMS1 and RIMS2. Interacts with ERC2/CAST1. Interacts with the GTB-bound forms of RAB6A isoform 1 and isoform 2 and with RAB6B. The interaction was strongest with RAB6B, followed by RAB6A isoform 2 and weakest with RAB6A isoform 1. Interacts with SDCCAG8. Part of a cortical microtubule stabilization complex (CMSC) composed of KANK1, PPFIA1, PPFIBP1, ERC1/ELKS, PHLDB2/LL5beta, CLASPs, KIF21A and possibly additional interactors; within CMSCs KANK1 and PHLDB2/LL5beta appear to be the core components for targeting of microtubule-binding proteins KIF21A and CLASPs, whereas PPFIA1, PPFIBP1 and ERC1/ELKS serve as scaffolds for protein clustering. Widely expressed. Isoform 2 and isoform 4 are abundantly expressed in brain. Isoform 1 and isoform 3 are predominantly expressed in testis and thyroid, and isoform 1 predominates in other tissues tested.

It localises to the cytoplasm. The protein resides in the cytoskeleton. The protein localises to the microtubule organizing center. It is found in the centrosome. Its subcellular location is the membrane. It localises to the golgi apparatus membrane. The protein resides in the presynaptic cell membrane. The protein localises to the cell projection. It is found in the podosome. Its function is as follows. Regulatory subunit of the IKK complex. Probably recruits IkappaBalpha/NFKBIA to the complex. May be involved in the organization of the cytomatrix at the nerve terminals active zone (CAZ) which regulates neurotransmitter release. May be involved in vesicle trafficking at the CAZ. May be involved in Rab-6 regulated endosomes to Golgi transport. The chain is ELKS/Rab6-interacting/CAST family member 1 (ERC1) from Homo sapiens (Human).